The primary structure comprises 489 residues: Leukocyte immunoglobulin-like receptor subfamily A member 1 (489 aa).

An N-terminal signal peptide occupies residues 1–16; it reads MTPIVTVLICLRLSLG. The Extracellular segment spans residues 17–461; sequence PRTHVQAGTL…SHPQDYTVEN (445 aa). 4 consecutive Ig-like C2-type domains span residues 27 to 116, 119 to 224, 226 to 315, and 326 to 415; these read PKPT…PLEL, TGAY…GVSK, PSLS…DPLD, and PFIS…SDSL. Cys49 and Cys98 are disulfide-bonded. A glycan (N-linked (GlcNAc...) asparagine) is linked at Asn140. 3 disulfide bridges follow: Cys145–Cys197, Cys157–Cys167, and Cys246–Cys297. N-linked (GlcNAc...) asparagine glycosylation is found at Asn281, Asn302, and Asn341. Cys346 and Cys397 are oxidised to a cystine. The disordered stretch occupies residues 425 to 453; it reads TLSPPQNKSDSKAGAANTLSPSQNKTASH. 2 N-linked (GlcNAc...) asparagine glycosylation sites follow: Asn431 and Asn448. Positions 441–453 are enriched in polar residues; sequence NTLSPSQNKTASH. Residues 462–482 traverse the membrane as a helical segment; that stretch reads LIRMGIAGLVLVVLGILLFEA. At 483-489 the chain is on the cytoplasmic side; sequence QHSQRSL.

As to expression, detected in monocytes and B-cells.

The protein localises to the membrane. Functionally, may act as receptor for class I MHC antigens. This chain is Leukocyte immunoglobulin-like receptor subfamily A member 1 (LILRA1), found in Homo sapiens (Human).